A 223-amino-acid polypeptide reads, in one-letter code: Endo-1,4-beta-xylanase 2 (223 aa).

An N-terminal signal peptide occupies residues 1–19 (MVSFTSLLAGVAAISGVLA). A propeptide spanning residues 20–33 (APAAEVESVAVEKR) is cleaved from the precursor. Gln-34 carries the post-translational modification Pyrrolidone carboxylic acid. The region spanning 34–222 (QTIQPGTGYN…FSSGSASITV (189 aa)) is the GH11 domain. N-linked (GlcNAc...) asparagine glycans are attached at residues Asn-71 and Asn-94. Tyr-106 and Tyr-110 together coordinate substrate. Glu-119 acts as the Nucleophile in catalysis. Substrate is bound by residues Tyr-121, Arg-155, Pro-159, Gln-169, and Tyr-204. Glu-210 serves as the catalytic Proton donor.

The protein belongs to the glycosyl hydrolase 11 (cellulase G) family.

It is found in the secreted. The enzyme catalyses Endohydrolysis of (1-&gt;4)-beta-D-xylosidic linkages in xylans.. Its pathway is glycan degradation; xylan degradation. Functionally, glycoside hydrolase involved in the hydrolysis of xylan, a major plant cell wall hemicellulose made up of 1,4-beta-linked D-xylopyranose residues. Catalyzes the endohydrolysis of the main-chain 1,4-beta-glycosidic bonds connecting the xylose subunits yielding various xylooligosaccharides and xylose. The catalysis proceeds by a double-displacement reaction mechanism with a putative covalent glycosyl-enzyme intermediate, with retention of the anomeric configuration. Produces xylobiose and xylose as the main degradation products. This is Endo-1,4-beta-xylanase 2 from Hypocrea jecorina (strain ATCC 56765 / BCRC 32924 / NRRL 11460 / Rut C-30) (Trichoderma reesei).